The primary structure comprises 280 residues: Energy-coupling factor transporter ATP-binding protein EcfA2 (280 aa).

In terms of domain architecture, ABC transporter spans I3–G245. Residue G40 to S47 participates in ATP binding.

It belongs to the ABC transporter superfamily. Energy-coupling factor EcfA family. In terms of assembly, forms a stable energy-coupling factor (ECF) transporter complex composed of 2 membrane-embedded substrate-binding proteins (S component), 2 ATP-binding proteins (A component) and 2 transmembrane proteins (T component).

Its subcellular location is the cell membrane. ATP-binding (A) component of a common energy-coupling factor (ECF) ABC-transporter complex. Unlike classic ABC transporters this ECF transporter provides the energy necessary to transport a number of different substrates. The sequence is that of Energy-coupling factor transporter ATP-binding protein EcfA2 from Streptococcus pyogenes serotype M3 (strain ATCC BAA-595 / MGAS315).